The chain runs to 691 residues: DNA ligase (691 aa).

NAD(+) contacts are provided by residues 41-45 (DAEYD), 90-91 (SL), and Glu-130. Lys-132 acts as the N6-AMP-lysine intermediate in catalysis. The NAD(+) site is built by Arg-153, Glu-190, Lys-307, and Lys-331. Zn(2+)-binding residues include Cys-425, Cys-428, Cys-443, and Cys-449. Positions 610 to 691 (APQGVLAGKT…LHQLLEGNTR (82 aa)) constitute a BRCT domain.

This sequence belongs to the NAD-dependent DNA ligase family. LigA subfamily. Mg(2+) serves as cofactor. It depends on Mn(2+) as a cofactor.

It catalyses the reaction NAD(+) + (deoxyribonucleotide)n-3'-hydroxyl + 5'-phospho-(deoxyribonucleotide)m = (deoxyribonucleotide)n+m + AMP + beta-nicotinamide D-nucleotide.. DNA ligase that catalyzes the formation of phosphodiester linkages between 5'-phosphoryl and 3'-hydroxyl groups in double-stranded DNA using NAD as a coenzyme and as the energy source for the reaction. It is essential for DNA replication and repair of damaged DNA. This is DNA ligase from Burkholderia multivorans (strain ATCC 17616 / 249).